The chain runs to 396 residues: Acetate kinase (396 aa).

N8 is a Mg(2+) binding site. K15 lines the ATP pocket. R89 is a binding site for substrate. The active-site Proton donor/acceptor is D146. ATP contacts are provided by residues 206–210 (HIGNG), 283–285 (DMR), and 331–335 (GVGEN). E383 serves as a coordination point for Mg(2+).

The protein belongs to the acetokinase family. In terms of assembly, homodimer. Mg(2+) is required as a cofactor. It depends on Mn(2+) as a cofactor.

It localises to the cytoplasm. It catalyses the reaction acetate + ATP = acetyl phosphate + ADP. It functions in the pathway metabolic intermediate biosynthesis; acetyl-CoA biosynthesis; acetyl-CoA from acetate: step 1/2. Catalyzes the formation of acetyl phosphate from acetate and ATP. Can also catalyze the reverse reaction. In Streptococcus pneumoniae (strain JJA), this protein is Acetate kinase.